A 515-amino-acid chain; its full sequence is Maturase K (515 aa).

Belongs to the intron maturase 2 family. MatK subfamily.

It is found in the plastid. Its subcellular location is the chloroplast. In terms of biological role, usually encoded in the trnK tRNA gene intron. Probably assists in splicing its own and other chloroplast group II introns. The protein is Maturase K of Pinus koraiensis (Korean pine).